A 352-amino-acid chain; its full sequence is UDP-N-acetylglucosamine--N-acetylmuramyl-(pentapeptide) pyrophosphoryl-undecaprenol N-acetylglucosamine transferase 2 (352 aa).

UDP-N-acetyl-alpha-D-glucosamine-binding positions include 11 to 13 (SAG), Arg164, Ser194, and Gln289.

This sequence belongs to the glycosyltransferase 28 family. MurG subfamily.

It is found in the cell membrane. The enzyme catalyses di-trans,octa-cis-undecaprenyl diphospho-N-acetyl-alpha-D-muramoyl-L-alanyl-D-glutamyl-meso-2,6-diaminopimeloyl-D-alanyl-D-alanine + UDP-N-acetyl-alpha-D-glucosamine = di-trans,octa-cis-undecaprenyl diphospho-[N-acetyl-alpha-D-glucosaminyl-(1-&gt;4)]-N-acetyl-alpha-D-muramoyl-L-alanyl-D-glutamyl-meso-2,6-diaminopimeloyl-D-alanyl-D-alanine + UDP + H(+). It functions in the pathway cell wall biogenesis; peptidoglycan biosynthesis. In terms of biological role, cell wall formation. Catalyzes the transfer of a GlcNAc subunit on undecaprenyl-pyrophosphoryl-MurNAc-pentapeptide (lipid intermediate I) to form undecaprenyl-pyrophosphoryl-MurNAc-(pentapeptide)GlcNAc (lipid intermediate II). This chain is UDP-N-acetylglucosamine--N-acetylmuramyl-(pentapeptide) pyrophosphoryl-undecaprenol N-acetylglucosamine transferase 2, found in Bacillus cereus (strain ATCC 14579 / DSM 31 / CCUG 7414 / JCM 2152 / NBRC 15305 / NCIMB 9373 / NCTC 2599 / NRRL B-3711).